The following is a 428-amino-acid chain: 3-phosphoshikimate 1-carboxyvinyltransferase (428 aa).

The 3-phosphoshikimate site is built by K22, S23, and R27. Phosphoenolpyruvate is bound at residue K22. G94 and R122 together coordinate phosphoenolpyruvate. The 3-phosphoshikimate site is built by S168, S169, Q170, S196, D315, and K342. Q170 is a binding site for phosphoenolpyruvate. D315 (proton acceptor) is an active-site residue. Phosphoenolpyruvate contacts are provided by R346, R389, and K414.

This sequence belongs to the EPSP synthase family. In terms of assembly, monomer.

The protein localises to the cytoplasm. It catalyses the reaction 3-phosphoshikimate + phosphoenolpyruvate = 5-O-(1-carboxyvinyl)-3-phosphoshikimate + phosphate. It participates in metabolic intermediate biosynthesis; chorismate biosynthesis; chorismate from D-erythrose 4-phosphate and phosphoenolpyruvate: step 6/7. Catalyzes the transfer of the enolpyruvyl moiety of phosphoenolpyruvate (PEP) to the 5-hydroxyl of shikimate-3-phosphate (S3P) to produce enolpyruvyl shikimate-3-phosphate and inorganic phosphate. This chain is 3-phosphoshikimate 1-carboxyvinyltransferase, found in Thiobacillus denitrificans (strain ATCC 25259 / T1).